The following is a 1893-amino-acid chain: Plexin-A4 (1893 aa).

A signal peptide spans 1-23; the sequence is MKAMPWNWTCLLSHLLVVGMGSS. The Sema domain maps to 24 to 506; sequence TLLPRQPPQL…SERQLTRVPV (483 aa). At 24 to 1236 the chain is on the extracellular side; sequence TLLPRQPPQL…IAPDSPLSLP (1213 aa). 10 disulfides stabilise this stretch: C94/C103, C129/C137, C283/C404, C299/C355, C373/C392, C509/C526, C515/C557, C518/C535, C529/C541, and C592/C611. The PSI 1 domain maps to 508-558; that stretch reads SCGQYRSCGECLGSGDPHCGWCVLHNTCTRKERCERSREPRRFASEMKQCV. Residue N654 is glycosylated (N-linked (GlcNAc...) asparagine). PSI domains follow at residues 654 to 701 and 802 to 855; these read NCSV…EDCP and KCGA…SKCT. IPT/TIG domains follow at residues 857–951, 953–1036, 1039–1138, and 1141–1229; these read PRIT…YYFM, LTLA…FQYV, PTIV…FTYY, and PVFE…YIAP. 3 N-linked (GlcNAc...) asparagine glycosylation sites follow: N1006, N1131, and N1179. Residues 1237–1257 form a helical membrane-spanning segment; that stretch reads AIVSIAVAGGLLIIFIVAVLI. At 1258-1893 the chain is on the cytoplasmic side; that stretch reads AYKRKSRESD…QVITLMSLDS (636 aa). N6-acetyllysine is present on K1349.

It belongs to the plexin family. Interacts with NRP1 and NRP2. As to expression, expressed in the developing nervous system. Widely expressed in both the central and peripheral nervous systems. Expressed in the peripheral ganglia, somatosensory, olfactory, visual, auditory and equilibrium systems.

It localises to the cell membrane. Functionally, coreceptor for SEMA3A. Necessary for signaling by class 3 semaphorins and subsequent remodeling of the cytoskeleton. Plays a role in axon guidance in the developing nervous system. Class 3 semaphorins bind to a complex composed of a neuropilin and a plexin. The plexin modulates the affinity of the complex for specific semaphorins, and its cytoplasmic domain is required for the activation of down-stream signaling events in the cytoplasm. This is Plexin-A4 (Plxna4) from Mus musculus (Mouse).